A 282-amino-acid chain; its full sequence is Aquaporin-6 (282 aa).

Over 1–25 the chain is Cytoplasmic; sequence MDAVEPGGRGWASMLACRLWKAISR. Residues 26-46 traverse the membrane as a helical segment; the sequence is ALFAEFLATGLYVFFGVGSVM. Topologically, residues 47 to 54 are extracellular; it reads RWPTALPS. The helical transmembrane segment at 55–73 threads the bilayer; sequence VLQIAITFNLVTAMAVQVT. Residues 74-78 lie on the Cytoplasmic side of the membrane; the sequence is WKASG. The segment at residues 79-88 is an intramembrane region (discontinuously helical); sequence AHANPAVTLA. The short motif at 82–84 is the NPA 1 element; that stretch reads NPA. Topologically, residues 89-99 are cytoplasmic; sequence FLVGSHISLPR. The helical transmembrane segment at 100–121 threads the bilayer; the sequence is AVAYVAAQLVGATVGAALLYGV. The Extracellular portion of the chain corresponds to 122 to 141; it reads MPGDIRETLGINVVRNSVST. A helical transmembrane segment spans residues 142–162; the sequence is GQAVAVELLLTLQLVLCVFAS. Topologically, residues 163–168 are cytoplasmic; sequence TDSRQT. Residues 169–188 form a helical membrane-spanning segment; sequence SGSPATMIGISVALGHLIGI. At 189–192 the chain is on the extracellular side; that stretch reads HFTG. Residues 193–205 constitute an intramembrane region (discontinuously helical); it reads CSMNPARSFGPAI. Residues 196–198 carry the NPA 2 motif; the sequence is NPA. Topologically, residues 206 to 213 are extracellular; it reads IIGKFTVH. Residues 214–234 form a helical membrane-spanning segment; sequence WVFWVGPLMGALLASLIYNFV. Over 235-282 the chain is Cytoplasmic; sequence LFPDTKTLAQRLAILTGTVEVGTGAGAGAEPLKKESQPGSGAVEMESV. A disordered region spans residues 260 to 282; that stretch reads GAGAEPLKKESQPGSGAVEMESV.

It belongs to the MIP/aquaporin (TC 1.A.8) family. In terms of assembly, homotetramer; each monomer provides an independent solute pore.

The protein localises to the cytoplasmic vesicle membrane. The catalysed reaction is nitrate(in) = nitrate(out). The enzyme catalyses iodide(out) = iodide(in). It catalyses the reaction bromide(in) = bromide(out). It carries out the reaction chloride(in) = chloride(out). The catalysed reaction is Na(+)(in) = Na(+)(out). The enzyme catalyses H2O(in) = H2O(out). It catalyses the reaction CO2(out) = CO2(in). It carries out the reaction NH4(+)(in) = NH4(+)(out). In terms of biological role, aquaporins form homotetrameric transmembrane channels, with each monomer independently mediating water transport across the plasma membrane along its osmotic gradient. Unlike classical aquaporins, AQP6 is an intracellular channel with selective anion permeability, particularly for nitrate, and exhibits very low water permeability. It may also facilitate the transport of gases, such as CO2 and NH4(+), as demonstrated in vitro. This Homo sapiens (Human) protein is Aquaporin-6.